Here is a 330-residue protein sequence, read N- to C-terminus: UPF0353 protein MAP_3434 (330 aa).

A run of 2 helical transmembrane segments spans residues 21–41 (GMLL…VVQA) and 63–83 (LPIA…ATPT). Positions 94–289 (VIMLVIDMSQ…GELQKSYNAI (196 aa)) constitute a VWFA domain. Residues 304-324 (AGWLRLGVLTALIATALALLI) form a helical membrane-spanning segment.

This sequence belongs to the UPF0353 family.

It is found in the cell membrane. The sequence is that of UPF0353 protein MAP_3434 from Mycolicibacterium paratuberculosis (strain ATCC BAA-968 / K-10) (Mycobacterium paratuberculosis).